The primary structure comprises 521 residues: Ribonuclease Y (521 aa).

The helical transmembrane segment at 10–30 threads the bilayer; it reads LIITAGVSIALAIVAFFLGYL. One can recognise a KH domain in the interval 210-270; that stretch reads TVSVVTLPND…IRREIAKLTL (61 aa). The HD domain maps to 336–430; that stretch reads VLAHSIEVAN…IQAADSVSAA (95 aa).

It belongs to the RNase Y family.

The protein resides in the cell membrane. In terms of biological role, endoribonuclease that initiates mRNA decay. This chain is Ribonuclease Y, found in Caldicellulosiruptor saccharolyticus (strain ATCC 43494 / DSM 8903 / Tp8T 6331).